Reading from the N-terminus, the 457-residue chain is Siroheme synthase (457 aa).

The tract at residues 1 to 204 (MDHLPIFCQL…ADEKAVNATT (204 aa)) is precorrin-2 dehydrogenase /sirohydrochlorin ferrochelatase. NAD(+) is bound by residues 22-23 (DV) and 43-44 (LT). S128 carries the phosphoserine modification. Residues 216 to 457 (GEVVLVGAGP…RDKLNWFSNY (242 aa)) form a uroporphyrinogen-III C-methyltransferase region. P225 contributes to the S-adenosyl-L-methionine binding site. D248 acts as the Proton acceptor in catalysis. Residue K270 is the Proton donor of the active site. S-adenosyl-L-methionine-binding positions include 301–303 (GGD), I306, 331–332 (TA), M382, and G411.

The protein in the N-terminal section; belongs to the precorrin-2 dehydrogenase / sirohydrochlorin ferrochelatase family. It in the C-terminal section; belongs to the precorrin methyltransferase family.

The catalysed reaction is uroporphyrinogen III + 2 S-adenosyl-L-methionine = precorrin-2 + 2 S-adenosyl-L-homocysteine + H(+). It catalyses the reaction precorrin-2 + NAD(+) = sirohydrochlorin + NADH + 2 H(+). It carries out the reaction siroheme + 2 H(+) = sirohydrochlorin + Fe(2+). It functions in the pathway cofactor biosynthesis; adenosylcobalamin biosynthesis; precorrin-2 from uroporphyrinogen III: step 1/1. It participates in cofactor biosynthesis; adenosylcobalamin biosynthesis; sirohydrochlorin from precorrin-2: step 1/1. The protein operates within porphyrin-containing compound metabolism; siroheme biosynthesis; precorrin-2 from uroporphyrinogen III: step 1/1. Its pathway is porphyrin-containing compound metabolism; siroheme biosynthesis; siroheme from sirohydrochlorin: step 1/1. It functions in the pathway porphyrin-containing compound metabolism; siroheme biosynthesis; sirohydrochlorin from precorrin-2: step 1/1. Its function is as follows. Multifunctional enzyme that catalyzes the SAM-dependent methylations of uroporphyrinogen III at position C-2 and C-7 to form precorrin-2 via precorrin-1. Then it catalyzes the NAD-dependent ring dehydrogenation of precorrin-2 to yield sirohydrochlorin. Finally, it catalyzes the ferrochelation of sirohydrochlorin to yield siroheme. This Salmonella choleraesuis (strain SC-B67) protein is Siroheme synthase.